We begin with the raw amino-acid sequence, 291 residues long: Flavonol synthase/flavanone 3-hydroxylase (291 aa).

The region spanning 151–250 (CWYVMNINHY…RMSWPVLVSP (100 aa)) is the Fe2OG dioxygenase domain. Residues His175, Asp177, and His231 each contribute to the Fe cation site.

The protein belongs to the iron/ascorbate-dependent oxidoreductase family. The cofactor is L-ascorbate. Fe cation is required as a cofactor.

Its subcellular location is the cytoplasm. It carries out the reaction a (2R,3R)-dihydroflavonol + 2-oxoglutarate + O2 = a flavonol + succinate + CO2 + H2O. It catalyses the reaction a (2S)-flavan-4-one + 2-oxoglutarate + O2 = a (2R,3R)-dihydroflavonol + succinate + CO2. It participates in secondary metabolite biosynthesis; flavonoid biosynthesis. Its function is as follows. Catalyzes the formation of flavonols from dihydroflavonols. It can act on dihydrokaempferol to produce kaempferol, on dihydroquercetin to produce quercitin and on dihydromyricetin to produce myricetin. This is Flavonol synthase/flavanone 3-hydroxylase from Matthiola incana (Common stock).